The following is a 485-amino-acid chain: Glutamate--tRNA ligase (485 aa).

The 'HIGH' region motif lies at 11 to 21; that stretch reads PSPTGYMHVGN. Zn(2+) contacts are provided by C108, C110, C135, and D137. The 'KMSKS' region motif lies at 252 to 256; that stretch reads KLSKR. Position 255 (K255) interacts with ATP.

Belongs to the class-I aminoacyl-tRNA synthetase family. Glutamate--tRNA ligase type 1 subfamily. As to quaternary structure, monomer. Requires Zn(2+) as cofactor.

It localises to the cytoplasm. It catalyses the reaction tRNA(Glu) + L-glutamate + ATP = L-glutamyl-tRNA(Glu) + AMP + diphosphate. Catalyzes the attachment of glutamate to tRNA(Glu) in a two-step reaction: glutamate is first activated by ATP to form Glu-AMP and then transferred to the acceptor end of tRNA(Glu). The sequence is that of Glutamate--tRNA ligase from Clostridium botulinum (strain ATCC 19397 / Type A).